The chain runs to 149 residues: Probable cyclic pyranopterin monophosphate synthase (149 aa).

Residues 67-69 and 103-104 contribute to the substrate site; these read LCH and ME. Aspartate 118 is an active-site residue.

Belongs to the MoaC family. In terms of assembly, homohexamer; trimer of dimers.

It catalyses the reaction (8S)-3',8-cyclo-7,8-dihydroguanosine 5'-triphosphate = cyclic pyranopterin phosphate + diphosphate. The protein operates within cofactor biosynthesis; molybdopterin biosynthesis. Its function is as follows. Catalyzes the conversion of (8S)-3',8-cyclo-7,8-dihydroguanosine 5'-triphosphate to cyclic pyranopterin monophosphate (cPMP). The protein is Probable cyclic pyranopterin monophosphate synthase of Saccharolobus solfataricus (strain ATCC 35092 / DSM 1617 / JCM 11322 / P2) (Sulfolobus solfataricus).